Reading from the N-terminus, the 1357-residue chain is DNA-directed RNA polymerase subunit beta (1357 aa).

It belongs to the RNA polymerase beta chain family. The RNAP catalytic core consists of 2 alpha, 1 beta, 1 beta' and 1 omega subunit. When a sigma factor is associated with the core the holoenzyme is formed, which can initiate transcription.

The catalysed reaction is RNA(n) + a ribonucleoside 5'-triphosphate = RNA(n+1) + diphosphate. Functionally, DNA-dependent RNA polymerase catalyzes the transcription of DNA into RNA using the four ribonucleoside triphosphates as substrates. The chain is DNA-directed RNA polymerase subunit beta from Pseudomonas aeruginosa (strain UCBPP-PA14).